The sequence spans 250 residues: Peptidyl-tRNA hydrolase (250 aa).

Y14 provides a ligand contact to tRNA. H19 functions as the Proton acceptor in the catalytic mechanism. Positions 64, 66, and 112 each coordinate tRNA. Positions 192 to 250 (MGDGNQRPGGVKTDPAQLEKAPPKAQSHIRQARQNQKKPNIPESGPMAEMLKKLLGKKD) are disordered. The segment covering 219-229 (HIRQARQNQKK) has biased composition (polar residues). Over residues 241 to 250 (MLKKLLGKKD) the composition is skewed to basic and acidic residues.

This sequence belongs to the PTH family. As to quaternary structure, monomer.

It is found in the cytoplasm. It catalyses the reaction an N-acyl-L-alpha-aminoacyl-tRNA + H2O = an N-acyl-L-amino acid + a tRNA + H(+). In terms of biological role, hydrolyzes ribosome-free peptidyl-tRNAs (with 1 or more amino acids incorporated), which drop off the ribosome during protein synthesis, or as a result of ribosome stalling. Functionally, catalyzes the release of premature peptidyl moieties from peptidyl-tRNA molecules trapped in stalled 50S ribosomal subunits, and thus maintains levels of free tRNAs and 50S ribosomes. The chain is Peptidyl-tRNA hydrolase from Brucella suis (strain ATCC 23445 / NCTC 10510).